The sequence spans 623 residues: Protein vein (623 aa).

The first 40 residues, 1-40, serve as a signal peptide directing secretion; it reads MYAQHLRKWSLKTKKQLMPLILLIISYMLLLNTCVLSSSA. Disordered stretches follow at residues 70-98, 130-162, 184-214, and 229-317; these read IPLS…SSNN, DAGS…SMQK, AASS…NYSS, and PESM…QRYN. 2 stretches are compositionally biased toward low complexity: residues 72–98 and 136–158; these read LSSD…SSNN and PAQQ…QQQQ. N-linked (GlcNAc...) asparagine glycosylation is present at Asn76. Asn211 carries N-linked (GlcNAc...) asparagine glycosylation. A compositionally biased stretch (basic and acidic residues) spans 233-248; sequence LEDRSPEQAARSRRDG. Asn252 carries N-linked (GlcNAc...) asparagine glycosylation. Over residues 255-267 the composition is skewed to low complexity; the sequence is RQQQRTGHRQQLQ. Over residues 305–316 the composition is skewed to basic residues; the sequence is QRRKHQRKHQRY. Residues Asn350, Asn381, Asn424, Asn449, Asn521, and Asn574 are each glycosylated (N-linked (GlcNAc...) asparagine). The region spanning 457–542 is the Ig-like C2-type domain; it reads TKIFSKPSKA…AKNKASKAIA (86 aa). Cystine bridges form between Cys478-Cys531, Cys566-Cys577, Cys571-Cys588, and Cys590-Cys599. The EGF-like domain occupies 561-599; that stretch reads ASGIPCNFDYCFHNGTCRMIPDINEVYCRCPTEYFGNRC.

It localises to the secreted. Its function is as follows. Ligand for the EGF receptor. Seems to play a role in the global proliferation of wing disc cells and the larval patterning. Shows a strong synergistic genetic interaction with spi, suggesting a molecular interdependence. Required for the development of interveins cells. The polypeptide is Protein vein (vn) (Drosophila melanogaster (Fruit fly)).